The following is a 123-amino-acid chain: Anti-lipopolysaccharide factor (123 aa).

The N-terminal stretch at methionine 1–alanine 26 is a signal peptide. N-linked (GlcNAc...) asparagine glycosylation occurs at asparagine 45. A disulfide bridge links cysteine 55 with cysteine 76.

Isoform 1 is highly expressed in muscle and stomach, moderately in heart and gill and at lower levels in hemocytes and hepatopancreas. Isoform 2 is mainly expressed in gill, hepatopancreas, muscle and eyestalk.

It localises to the secreted. May bind to bacterial LPS and thus specifically inhibit the LPS-mediated activation of the hemolymph coagulation. It has a strong antibacterial effect especially on the growth of Gram-negative bacteria. The polypeptide is Anti-lipopolysaccharide factor (Portunus trituberculatus (Swimming crab)).